The sequence spans 148 residues: Translation initiation factor 2 subunit beta (148 aa).

It belongs to the eIF-2-beta/eIF-5 family. In terms of assembly, heterotrimer composed of an alpha, a beta and a gamma chain.

In terms of biological role, eIF-2 functions in the early steps of protein synthesis by forming a ternary complex with GTP and initiator tRNA. The sequence is that of Translation initiation factor 2 subunit beta (eif2b) from Aeropyrum pernix (strain ATCC 700893 / DSM 11879 / JCM 9820 / NBRC 100138 / K1).